The chain runs to 376 residues: Palmitoyl-[acyl-carrier-protein] 4-desaturase 2, chloroplastic (376 aa).

The N-terminal 33 residues, 1-33 (MELHLALRASPLPAADPGRRPPPPRGNFATNCT), are a transit peptide targeting the chloroplast. Positions 114, 149, 152, 202, 235, and 238 each coordinate Fe cation.

The protein belongs to the fatty acid desaturase type 2 family. As to quaternary structure, homodimer. Fe(2+) serves as cofactor. In terms of tissue distribution, preferentially expressed in the flower labellum.

Its subcellular location is the plastid. It localises to the chloroplast stroma. The enzyme catalyses hexadecanoyl-[ACP] + 2 reduced [2Fe-2S]-[ferredoxin] + O2 + 2 H(+) = (4Z)-hexadecenoyl-[ACP] + 2 oxidized [2Fe-2S]-[ferredoxin] + 2 H2O. The catalysed reaction is octadecanoyl-[ACP] + 2 reduced [2Fe-2S]-[ferredoxin] + O2 + 2 H(+) = (9Z)-octadecenoyl-[ACP] + 2 oxidized [2Fe-2S]-[ferredoxin] + 2 H2O. Its pathway is lipid metabolism; fatty acid metabolism. Functionally, converts stearoyl-ACP to oleoyl-ACP by introduction of a cis double bond between carbons 9 and 10 of the acyl chain. Converts palmitoyl-ACP to (4Z)-hexadec-4-enoyl-ACP by introduction of a cis double bond between carbons 4 and 5 of the acyl chain. Catalyzes the desaturation of saturated fatty acid 18:0 and 16:0 to generate 18:1 (delta-9) and 16:1 (delta-4) intermediates, expected to give rise to 9-alkenes and 12-alkenes, respectively. This is Palmitoyl-[acyl-carrier-protein] 4-desaturase 2, chloroplastic (SAD2) from Ophrys sphegodes (Early spider orchid).